The following is a 440-amino-acid chain: tRNA(Ile)-lysidine synthase (440 aa).

Position 28–33 (28–33 (SGGMDS)) interacts with ATP.

The protein belongs to the tRNA(Ile)-lysidine synthase family.

It localises to the cytoplasm. The catalysed reaction is cytidine(34) in tRNA(Ile2) + L-lysine + ATP = lysidine(34) in tRNA(Ile2) + AMP + diphosphate + H(+). Functionally, ligates lysine onto the cytidine present at position 34 of the AUA codon-specific tRNA(Ile) that contains the anticodon CAU, in an ATP-dependent manner. Cytidine is converted to lysidine, thus changing the amino acid specificity of the tRNA from methionine to isoleucine. The polypeptide is tRNA(Ile)-lysidine synthase (Xanthomonas axonopodis pv. citri (strain 306)).